A 390-amino-acid chain; its full sequence is 23S rRNA (uracil(747)-C(5))-methyltransferase RlmC (390 aa).

The [4Fe-4S] cluster site is built by Cys-12, Cys-20, Cys-23, and Cys-100. Residues Gln-225, Phe-254, Glu-275, and Asn-322 each coordinate S-adenosyl-L-methionine. Catalysis depends on Cys-349, which acts as the Nucleophile.

Belongs to the class I-like SAM-binding methyltransferase superfamily. RNA M5U methyltransferase family. RlmC subfamily.

The enzyme catalyses uridine(747) in 23S rRNA + S-adenosyl-L-methionine = 5-methyluridine(747) in 23S rRNA + S-adenosyl-L-homocysteine + H(+). Its function is as follows. Catalyzes the formation of 5-methyl-uridine at position 747 (m5U747) in 23S rRNA. The protein is 23S rRNA (uracil(747)-C(5))-methyltransferase RlmC of Shewanella baltica (strain OS155 / ATCC BAA-1091).